We begin with the raw amino-acid sequence, 299 residues long: MSMSRLGLLLFVAILLVLLQSSTCLISSPSSIINPSKVKQVSSKPRAFVYEGFLTDLECDHLISLAKENLQRSAVADNDNGESQVSDVRTSSGTFISKGKDPIVSGIEDKLSTWTFLPKENGEDLQVLRYEHGQKYDAHFDYFHDKVNIARGGHRIATVLLYLSNVTKGGETVFPDAQEFSRRSLSENKDDLSDCAKKGIAVKPKKGNALLFFNLQQDAIPDPFSLHGGCPVIEGEKWSATKWIHVDSFDKILTHDGNCTDVNESCERWAVLGECGKNPEYMVGTPEIPGNCRRSCKAC.

At Met-1–Arg-5 the chain is on the cytoplasmic side. Residues Leu-6–Ile-26 traverse the membrane as a helical; Signal-anchor for type II membrane protein segment. Over Ser-27–Cys-299 the chain is Lumenal. The 126-residue stretch at Asn-121 to Val-246 folds into the Fe2OG dioxygenase domain. Positions 139 and 141 each coordinate Fe cation. Asn-165 carries an N-linked (GlcNAc...) asparagine glycan. Residue His-227 participates in Fe cation binding. Lys-237 provides a ligand contact to 2-oxoglutarate. Asn-258 and Asn-263 each carry an N-linked (GlcNAc...) asparagine glycan. Residues Cys-259–Cys-299 enclose the ShKT domain. 3 disulfide bridges follow: Cys-259–Cys-299, Cys-266–Cys-292, and Cys-275–Cys-296.

Belongs to the P4HA family. Requires Fe(2+) as cofactor. The cofactor is L-ascorbate. Expressed in epidermal root hair cells (trichoblasts).

The protein localises to the endoplasmic reticulum membrane. The protein resides in the golgi apparatus membrane. It catalyses the reaction L-prolyl-[collagen] + 2-oxoglutarate + O2 = trans-4-hydroxy-L-prolyl-[collagen] + succinate + CO2. In terms of biological role, catalyzes the post-translational formation of 4-hydroxyproline in -Xaa-Pro-Gly- sequences in proline-rich peptide sequences of plant glycoproteins and other proteins. Hydroxyprolines are important constituent of many plant cell wall glycoproteins such as extensins, hydroxyproline-rich glycoproteins, lectins and arabinogalactan proteins. Possesses high affinity for leucine-rich repeat and proline-rich extensins of root cell walls that are essential for root hair development. Hydroxyprolines define the subsequent O-glycosylation sites by arabinosyltransferases which elongate the O-arabinosides on extensins. Has low affinity for the substrates tested in vitro. The protein is Prolyl 4-hydroxylase 2 of Arabidopsis thaliana (Mouse-ear cress).